Reading from the N-terminus, the 946-residue chain is Serine/threonine-protein kinase PLK4 (946 aa).

The Protein kinase domain maps to 12–265 (FKVLNLLGKG…LSSVLDHAFM (254 aa)). ATP contacts are provided by residues 18–26 (LGKGSFACV) and lysine 41. The active-site Proton acceptor is the aspartate 136. Residues 330-395 (HPAERSNGGS…TYGKPSSFSE (66 aa)) form a disordered region. Residues 378–394 (RSGTSQSQTYGKPSSFS) show a composition bias toward polar residues. The region spanning 566-679 (TLRSIISPLN…AKFIQLVRSK (114 aa)) is the Cryptic POLO box 1 (CPB1) domain. The Cryptic POLO box 2 (CPB2) domain maps to 680–792 (MPKVTYYTRY…GRRPAITESP (113 aa)). The tract at residues 789–828 (TESPRTQLTVDSARERKDEQSSANRVLHSSATSPPQIPNI) is disordered. Positions 809–828 (SSANRVLHSSATSPPQIPNI) are enriched in polar residues. The 79-residue stretch at 864–942 (QVLKSVFVEN…LSSILMLFAS (79 aa)) folds into the POLO box domain.

The protein belongs to the protein kinase superfamily. Ser/Thr protein kinase family. CDC5/Polo subfamily. As to quaternary structure, homodimer. Post-translationally, ubiquitinated; leading to its degradation by the proteasome.

It localises to the cytoplasm. Its subcellular location is the cytoskeleton. It is found in the microtubule organizing center. The protein localises to the centrosome. The protein resides in the centriole. It catalyses the reaction L-seryl-[protein] + ATP = O-phospho-L-seryl-[protein] + ADP + H(+). The catalysed reaction is L-threonyl-[protein] + ATP = O-phospho-L-threonyl-[protein] + ADP + H(+). Serine/threonine-protein kinase that plays a central role in centriole duplication. Able to trigger procentriole formation on the surface of the parental centriole cylinder, leading to the recruitment of centriole biogenesis proteins such as sass6, cpap, ccp110, cep135 and gamma-tubulin. When overexpressed, it is able to induce centrosome amplification through the simultaneous generation of multiple procentrioles adjoining each parental centriole during S phase. Its central role in centriole replication suggests a possible role in tumorigenesis, centrosome aberrations being frequently observed in tumors. Also involved in deuterosome-mediated centriole amplification in multiciliated that can generate more than 100 centrioles. The sequence is that of Serine/threonine-protein kinase PLK4 from Xenopus tropicalis (Western clawed frog).